A 416-amino-acid chain; its full sequence is Formyl-CoA:oxalate CoA-transferase (416 aa).

CoA is bound by residues 17–18, R38, 72–75, 96–98, H104, and 137–140; these read QS, LNTK, NFH, and KAYE. The Nucleophile role is filled by D169. 248 to 250 serves as a coordination point for substrate; that stretch reads GGQ. 273-275 is a binding site for CoA; that stretch reads QEQ.

This sequence belongs to the CoA-transferase III family. Frc subfamily. Homodimer.

It catalyses the reaction formyl-CoA + oxalate = oxalyl-CoA + formate. It functions in the pathway metabolic intermediate degradation; oxalate degradation; CO(2) and formate from oxalate: step 1/2. Functionally, involved in the catabolism of oxalate and in the adapatation to low pH via the induction of the oxalate-dependent acid tolerance response (ATR). Catalyzes the transfer of the CoA moiety from formyl-CoA to oxalate. This is Formyl-CoA:oxalate CoA-transferase from Escherichia coli (strain ATCC 8739 / DSM 1576 / NBRC 3972 / NCIMB 8545 / WDCM 00012 / Crooks).